The primary structure comprises 174 residues: Neuromedin-U (174 aa).

The signal sequence occupies residues 1-34; that stretch reads MLRTESCRPRSPAGQVAAASPLLLLLLLLAWCAG. The propeptide occupies 35–103; the sequence is ACRGAPILPQ…EQDEKDNTKR (69 aa). Met139 carries the methionine sulfoxide; partial modification. Asn166 carries the post-translational modification Asparagine amide. A propeptide spanning residues 170 to 174 is cleaved from the precursor; that stretch reads SAGFI.

The protein belongs to the NmU family. As to expression, expressed throughout the enteric nervous system with highest levels being found in the jejunum.

It is found in the secreted. In terms of biological role, ligand for receptors NMUR1 and NMUR2. Stimulates muscle contractions of specific regions of the gastrointestinal tract. In humans, NmU stimulates contractions of the ileum and urinary bladder. Its function is as follows. Does not function as a ligand for either NMUR1 or NMUR2. Indirectly induces prolactin release although its potency is much lower than that of neuromedin precursor-related peptide 36. Does not function as a ligand for either NMUR1 or NMUR2. Indirectly induces prolactin release from lactotroph cells in the pituitary gland, probably via the hypothalamic dopaminergic system. In Homo sapiens (Human), this protein is Neuromedin-U (NMU).